A 191-amino-acid polypeptide reads, in one-letter code: Ribonuclease HII (191 aa).

The region spanning 16–191 is the RNase H type-2 domain; that stretch reads INLIGIDEAG…KLHRKSFKLL (176 aa). Residues Asp-22, Glu-23, and Asp-110 each coordinate a divalent metal cation.

The protein belongs to the RNase HII family. Mn(2+) serves as cofactor. Requires Mg(2+) as cofactor.

It is found in the cytoplasm. It carries out the reaction Endonucleolytic cleavage to 5'-phosphomonoester.. In terms of biological role, endonuclease that specifically degrades the RNA of RNA-DNA hybrids. This Campylobacter jejuni subsp. jejuni serotype O:2 (strain ATCC 700819 / NCTC 11168) protein is Ribonuclease HII (rnhB).